Reading from the N-terminus, the 184-residue chain is Acyl-homoserine-lactone synthase (184 aa).

The protein belongs to the autoinducer synthase family.

The enzyme catalyses a fatty acyl-[ACP] + S-adenosyl-L-methionine = an N-acyl-L-homoserine lactone + S-methyl-5'-thioadenosine + holo-[ACP] + H(+). Its function is as follows. Involved in the synthesis of the acyl-homoserine lactone (AHL) signal N-(3-hydroxydodecanoyl)-L-HSL (3-hydroxy-C(12)-HSL or OH-dDHL). Required for normal biofilm development. The protein is Acyl-homoserine-lactone synthase of Acinetobacter baumannii.